Reading from the N-terminus, the 100-residue chain is Small ribosomal subunit protein uS14c (100 aa).

It belongs to the universal ribosomal protein uS14 family. Part of the 30S ribosomal subunit.

It localises to the plastid. Its function is as follows. Binds 16S rRNA, required for the assembly of 30S particles. The polypeptide is Small ribosomal subunit protein uS14c (Cuscuta obtusiflora (Peruvian dodder)).